A 419-amino-acid polypeptide reads, in one-letter code: L-rhamnose isomerase (419 aa).

His262, Asp294, and Asp296 together coordinate Mn(2+).

The protein belongs to the rhamnose isomerase family. In terms of assembly, homotetramer. Mn(2+) is required as a cofactor.

The protein localises to the cytoplasm. The catalysed reaction is L-rhamnopyranose = L-rhamnulose. Its pathway is carbohydrate degradation; L-rhamnose degradation; glycerone phosphate from L-rhamnose: step 1/3. Its function is as follows. Catalyzes the interconversion of L-rhamnose and L-rhamnulose. The protein is L-rhamnose isomerase of Salmonella paratyphi A (strain AKU_12601).